A 543-amino-acid chain; its full sequence is Small conductance calcium-activated potassium channel protein 1 (543 aa).

The segment at 1–92 is disordered; sequence MNSHSYNGSV…SGKPSNVGHR (92 aa). A compositionally biased stretch (acidic residues) spans 65–76; the sequence is DQDDDEDDEEDE. A helical transmembrane segment spans residues 111–131; sequence LIFGMFGIVVMVTETELSWGV. A helical transmembrane segment spans residues 140–160; sequence FALKCLISLSTAILLGLVVLY. Residues 179–199 form a helical membrane-spanning segment; the sequence is IAMTCERVFLISLELAVCAIH. A helical transmembrane segment spans residues 228 to 248; sequence VLLSIPMFLRLYLLGRVMLLH. A helical transmembrane segment spans residues 277-297; the sequence is LMTICPGTVLLVFSISSWIIA. Positions 317–337 form an intramembrane region, pore-forming; sequence FLGAMWLISITFLSIGYGDMV. Residues 346 to 366 form a helical membrane-spanning segment; it reads VCLLTGIMGAGCTALVVAVVA. Residues 384-463 are calmodulin-binding; sequence DTQLTKRVKN…LTDLAKTQTV (80 aa). The interval 505-543 is disordered; that stretch reads QAIRPPPPPLPPRPGPGPQDQAARSSPCRWTPVAPSDCG. The segment covering 508-521 has biased composition (pro residues); that stretch reads RPPPPPLPPRPGPG.

Belongs to the potassium channel KCNN family. KCa2.1/KCNN1 subfamily. Homodimer. Heteromultimer with KCNN2 and KCNN3. The complex is composed of 4 channel subunits each of which binds to a calmodulin subunit which regulates the channel activity through calcium-binding. Interacts with calmodulin.

The protein resides in the membrane. Its subcellular location is the cytoplasm. It is found in the myofibril. It localises to the sarcomere. The protein localises to the z line. The catalysed reaction is K(+)(in) = K(+)(out). Its activity is regulated as follows. Inhibited by bee venom neurotoxin apamin. Inhibited by d-tubocurarine and tetraethylammonium (TEA). Small conductance calcium-activated potassium channel that mediates the voltage-independent transmembrane transfer of potassium across the cell membrane through a constitutive interaction with calmodulin which binds the intracellular calcium allowing its opening. The current is characterized by a voltage-independent activation, an intracellular calcium concentration increase-dependent activation and a single-channel conductance of about 3 picosiemens. Also presents an inwardly rectifying current, thus reducing its already small outward conductance of potassium ions, which is particularly the case when the membrane potential displays positive values, above + 20 mV. Activation is followed by membrane hyperpolarization. Thought to regulate neuronal excitability by contributing to the slow component of synaptic afterhyperpolarization. In Homo sapiens (Human), this protein is Small conductance calcium-activated potassium channel protein 1.